The chain runs to 335 residues: Methionine import ATP-binding protein MetN (335 aa).

The ABC transporter domain maps to 2-241; it reads IQFKDSYKHY…PQHPTTRSFV (240 aa). 38–45 contacts ATP; sequence GHSGAGKS.

It belongs to the ABC transporter superfamily. Methionine importer (TC 3.A.1.24) family. As to quaternary structure, the complex is composed of two ATP-binding proteins (MetN), two transmembrane proteins (MetI) and a solute-binding protein (MetQ).

The protein localises to the cell inner membrane. The catalysed reaction is L-methionine(out) + ATP + H2O = L-methionine(in) + ADP + phosphate + H(+). It carries out the reaction D-methionine(out) + ATP + H2O = D-methionine(in) + ADP + phosphate + H(+). Functionally, part of the ABC transporter complex MetNIQ involved in methionine import. Responsible for energy coupling to the transport system. This Xylella fastidiosa (strain Temecula1 / ATCC 700964) protein is Methionine import ATP-binding protein MetN.